The following is a 572-amino-acid chain: Hemagglutinin-neuraminidase (572 aa).

The Intravirion portion of the chain corresponds to M1–K31. The helical transmembrane segment at I32–L52 threads the bilayer. At I53–S572 the chain is on the virion surface side. 2 cysteine pairs are disulfide-bonded: C190–C214 and C256–C269. The interval N252–S257 is involved in neuraminidase activity. N-linked (GlcNAc...) asparagine; by host glycosylation is found at N308 and N351. Intrachain disulfides connect C355/C469 and C463/C473. N-linked (GlcNAc...) asparagine; by host glycosylation is present at N523. C535 and C544 are oxidised to a cystine.

It belongs to the paramyxoviruses hemagglutinin-neuraminidase family. In terms of assembly, homotetramer; composed of disulfide-linked homodimers. Interacts with F protein trimer.

It is found in the virion membrane. The protein localises to the host cell membrane. The enzyme catalyses Hydrolysis of alpha-(2-&gt;3)-, alpha-(2-&gt;6)-, alpha-(2-&gt;8)- glycosidic linkages of terminal sialic acid residues in oligosaccharides, glycoproteins, glycolipids, colominic acid and synthetic substrates.. Functionally, attaches the virus to sialic acid-containing cell receptors and thereby initiating infection. Binding of HN protein to the receptor induces a conformational change that allows the F protein to trigger virion/cell membranes fusion. Its function is as follows. Neuraminidase activity ensures the efficient spread of the virus by dissociating the mature virions from the neuraminic acid containing glycoproteins. The protein is Hemagglutinin-neuraminidase (HN) of Homo sapiens (Human).